We begin with the raw amino-acid sequence, 905 residues long: Coatomer subunit beta' (905 aa).

8 WD repeats span residues 13–52, 55–94, 97–136, 140–180, 183–224, 227–266, 350–388, and 390–425; these read ARSDRVKSVDLHPTEPWMLASLYNGSVCVWNHETQTLVKT, VCDLPVRAAKFVARKNWVVTGADDMQIRVFNYNTLERVHM, AHSDYIRCIAVHPTQPFILTSSDDMLIKLWDWDKKWSCSQ, GHTH…PNFT, GHEK…CVQT, GHAQNVSCASFHPELPIIITGSEDGTVRIWHSSTYRLEST, SCEIYPQTIQHNPNGRFVVVCGDGEYIIYTAMALRNKSF, and SAQEFAWAHDSSEYAIRESNSIVKIFKNFKEKKSFK. At lysine 627 the chain carries N6-acetyllysine. Residues 746–783 form a WD 9 repeat; sequence IRTGRLPEAAFLARTYLPSQVSRVVKLWRENLSKVNQK. The interval 837–873 is disordered; it reads EEAKGFQPSRPTAQQEPDGKPASSPVIMASQTTHKEE. Serine 859 is modified (phosphoserine). A coiled-coil region spans residues 867-891; the sequence is QTTHKEEKSLLELEVDLDNLELEDI.

The protein belongs to the WD repeat COPB2 family. As to quaternary structure, oligomeric complex that consists of at least the alpha, beta, beta', gamma, delta, epsilon and zeta subunits. Probably interacts with PEX11A. Interacts with SCYL1. Interacts with JAGN1.

Its subcellular location is the cytoplasm. The protein resides in the cytosol. The protein localises to the golgi apparatus membrane. It is found in the cytoplasmic vesicle. It localises to the COPI-coated vesicle membrane. Functionally, the coatomer is a cytosolic protein complex that binds to dilysine motifs and reversibly associates with Golgi non-clathrin-coated vesicles, which further mediate biosynthetic protein transport from the ER, via the Golgi up to the trans Golgi network. Coatomer complex is required for budding from Golgi membranes, and is essential for the retrograde Golgi-to-ER transport of dilysine-tagged proteins. In mammals, the coatomer can only be recruited by membranes associated to ADP-ribosylation factors (ARFs), which are small GTP-binding proteins; the complex also influences the Golgi structural integrity, as well as the processing, activity, and endocytic recycling of LDL receptors. This coatomer complex protein, essential for Golgi budding and vesicular trafficking, is a selective binding protein (RACK) for protein kinase C, epsilon type. It binds to Golgi membranes in a GTP-dependent manner. This Mus musculus (Mouse) protein is Coatomer subunit beta' (Copb2).